We begin with the raw amino-acid sequence, 355 residues long: MWNKNRLTQMLSIEYPIIQAGMAGSTTPKLVASVSNSGGLGTIGAGYFNTQQLEDEIDYVRQLTSNSFGVNVFVPSQQSYTSSQIENMNAWLKPYRRALHLEEPVVKITEEQQFKCHIDTIIKKQVPVCCFTFGIPSEQIISRLKAANVKLIGTATSVDEAIANEKAGMDAIVAQGSEAGGHRGSFLKPKNQLPMVGTISLVPQIVDVVSIPVIAAGGIMDGRGVLASIVLGAEGVQMGTAFLTSQDSNASELLRDAIINSKETDTVITKAFSGKLARGINNRFIEEMSQYEGDIPDYPIQNELTSSIRKAAANIGDKELIHMWSGQSPRLATTHPANTIMSNIINQINQIMQYK.

Residues N71, Q175, G180, G218, and 237-240 (QMGT) contribute to the FMN site.

This sequence belongs to the nitronate monooxygenase family. NMO class I subfamily. Requires FMN as cofactor.

It catalyses the reaction 3 propionate 3-nitronate + 3 O2 + H2O = 3 3-oxopropanoate + 2 nitrate + nitrite + H2O2 + 3 H(+). Functionally, nitronate monooxygenase that uses molecular oxygen to catalyze the oxidative denitrification of alkyl nitronates. Acts on propionate 3-nitronate (P3N), the presumed physiological substrate. Probably functions in the detoxification of P3N, a metabolic poison produced by plants and fungi as a defense mechanism. This is Probable nitronate monooxygenase from Staphylococcus aureus (strain USA300).